The sequence spans 149 residues: Cyanate hydratase (149 aa).

Active-site residues include R90, E93, and S116.

It belongs to the cyanase family.

The catalysed reaction is cyanate + hydrogencarbonate + 3 H(+) = NH4(+) + 2 CO2. Functionally, catalyzes the reaction of cyanate with bicarbonate to produce ammonia and carbon dioxide. This chain is Cyanate hydratase, found in Synechocystis sp. (strain ATCC 27184 / PCC 6803 / Kazusa).